The primary structure comprises 104 residues: Ribonuclease P protein component 4 (104 aa).

Zn(2+) contacts are provided by Cys-57, Cys-60, Cys-83, and Cys-86.

It belongs to the eukaryotic/archaeal RNase P protein component 4 family. As to quaternary structure, consists of a catalytic RNA component and at least 4-5 protein subunits. It depends on Zn(2+) as a cofactor.

The protein localises to the cytoplasm. It carries out the reaction Endonucleolytic cleavage of RNA, removing 5'-extranucleotides from tRNA precursor.. Its function is as follows. Part of ribonuclease P, a protein complex that generates mature tRNA molecules by cleaving their 5'-ends. In Saccharolobus islandicus (strain M.16.27) (Sulfolobus islandicus), this protein is Ribonuclease P protein component 4.